A 132-amino-acid polypeptide reads, in one-letter code: MAKLNQVTLSKIGKNGDQTLTLTPRGVNPTNGVASLSEAGAVPALEKRVTVSVAQPSRNRKNFKVQIKLQNPTACTRDACDPSVTRSAFADVTLSFTSYSTDEERALIRTELAALLADPLIVDAIDNLNPAY.

This sequence belongs to the Leviviricetes capsid protein family. In terms of assembly, homodimer. The capsid protein dimer binds to the viral RNA via an operator hairpin, but also many other RNA sequences in the viral genome.

The protein resides in the virion. Capsid protein self-assembles to form an icosahedral capsid with a T=3 symmetry, about 26 nm in diameter, and consisting of 89 capsid proteins dimers (178 capsid proteins). Involved in viral genome encapsidation through the interaction between a capsid protein dimer and the multiple packaging signals present in the RNA genome. Binding of the capsid proteins to the viral RNA induces a conformational change required for efficient T=3 shell formation. The capsid also contains 1 copy of the A2 maturation protein. In terms of biological role, acts as a translational repressor of viral replicase synthesis late in infection. This latter function is the result of capsid protein interaction with an RNA hairpin which contains the replicase ribosome-binding site. This is Capsid protein from Enterobacteria phage SP (Bacteriophage SP).